The sequence spans 485 residues: Glutamyl-tRNA(Gln) amidotransferase subunit A (485 aa).

Catalysis depends on charge relay system residues Lys78 and Ser153. The active-site Acyl-ester intermediate is the Ser177.

The protein belongs to the amidase family. GatA subfamily. In terms of assembly, heterotrimer of A, B and C subunits.

It catalyses the reaction L-glutamyl-tRNA(Gln) + L-glutamine + ATP + H2O = L-glutaminyl-tRNA(Gln) + L-glutamate + ADP + phosphate + H(+). Its function is as follows. Allows the formation of correctly charged Gln-tRNA(Gln) through the transamidation of misacylated Glu-tRNA(Gln) in organisms which lack glutaminyl-tRNA synthetase. The reaction takes place in the presence of glutamine and ATP through an activated gamma-phospho-Glu-tRNA(Gln). This chain is Glutamyl-tRNA(Gln) amidotransferase subunit A, found in Syntrophus aciditrophicus (strain SB).